Reading from the N-terminus, the 628-residue chain is MGSIDGTRPKLSKDNKKLLKKQAKAKHILLKHEGIETVLHLSQSLVVANGGLGNGVSRQQLLAVLERCGKVETLLMPPNKPYAFVTYSSAEEAIKAYSSLSGQELCGEDAEQPITLYLSFVEKVVVKEVLSPSLPPGLIIVEDFVSPEQERTMLESIDWDSETSSQKSLKHRQVKHYGYEFRYDNNNVDKDKPLPGGLPDFCTEALRKCVQRGLIKHDPDQLTINQYEPGQGIPPHVDTHSAFEDEILSLSLGAEIVMDFKHPNGSVVPVMLPQRSLLIMSGESRYLWTHGITPRKFDVIQVSEGQTVGTISGNSGELTLSKRSTRTSFTFRKVRHSPCDCAFPSECDSQQTQKEKSPPTVGELGASTLEREYVHKVYDDIAGHFSSTRHTPWPKIGDFLASLPKGSLVADVGCGNGKYLGVNKDLCMIGCDRSKNLVDICRERTFEAFVCDALSVPFRAGAFDACISIAVIHHFATEERRIAALQELIRLLRKGGKALIYVWALEQEYKKNKSKYLKESKTSQGPSSDALGTNLAVKAPLPIHTNRTSFHSQDLLVPWHLKPTNKSKVTPENKEQNEKEHGPDSVYHRFYHVFCEGELEAMCNRLSNVAVQHSYHDQGNWCVILEKL.

Residues 43–123 (QSLVVANGGL…ITLYLSFVEK (81 aa)) form the RRM domain. The region spanning 218–335 (DPDQLTINQY…RTSFTFRKVR (118 aa)) is the Fe2OG dioxygenase domain. 225–227 (NQY) lines the 2-oxoglutarate pocket. Residues His-236 and Asp-238 each coordinate Fe cation. His-240 contributes to the Zn(2+) binding site. Fe cation is bound at residue His-290. 2-oxoglutarate is bound by residues Arg-326 and Arg-332. 3 residues coordinate Zn(2+): Cys-339, Cys-341, and Cys-347. The interval 410 to 628 (ADVGCGNGKY…GNWCVILEKL (219 aa)) is methyltransferase domain. The segment at 563–582 (PTNKSKVTPENKEQNEKEHG) is disordered. Positions 569 to 582 (VTPENKEQNEKEHG) are enriched in basic and acidic residues.

The protein belongs to the alkB family. Fe(2+) is required as a cofactor.

The protein localises to the cytoplasm. The protein resides in the nucleus. It catalyses the reaction 5-(carboxymethyl)uridine(34) in tRNA + S-adenosyl-L-methionine = 5-(2-methoxy-2-oxoethyl)uridine(34) in tRNA + S-adenosyl-L-homocysteine. In terms of biological role, catalyzes the methylation of 5-carboxymethyl uridine to 5-methylcarboxymethyl uridine at the wobble position of the anticodon loop in tRNA via its methyltransferase domain. Catalyzes the last step in the formation of 5-methylcarboxymethyl uridine at the wobble position of the anticodon loop in target tRNA. Has a preference for tRNA(Arg) and tRNA(Glu), and does not bind tRNA(Lys). Binds tRNA and catalyzes the iron and alpha-ketoglutarate dependent hydroxylation of 5-methylcarboxymethyl uridine at the wobble position of the anticodon loop in tRNA via its dioxygenase domain, giving rise to 5-(S)-methoxycarbonylhydroxymethyluridine; has a preference for tRNA(Gly). Required for normal survival after DNA damage. May inhibit apoptosis and promote cell survival and angiogenesis. This Xenopus tropicalis (Western clawed frog) protein is tRNA (carboxymethyluridine(34)-5-O)-methyltransferase alkbh8 (alkbh8).